The following is a 141-amino-acid chain: MAMTIDVRVVSAEGSIYAGVADMVVAPGEMGELGILPRHAPLLTGLRPGELRIIHGAETEYLFVNGGILEIQPDMVTVLADSAERATDIDEAKALAAKQAAEARMAGHTDQMEYAAAQAELLEQIARLKTVQRLREQGFVR.

This sequence belongs to the ATPase epsilon chain family. As to quaternary structure, F-type ATPases have 2 components, CF(1) - the catalytic core - and CF(0) - the membrane proton channel. CF(1) has five subunits: alpha(3), beta(3), gamma(1), delta(1), epsilon(1). CF(0) has three main subunits: a, b and c.

Its subcellular location is the cell inner membrane. In terms of biological role, produces ATP from ADP in the presence of a proton gradient across the membrane. The protein is ATP synthase epsilon chain (atpC) of Acidithiobacillus ferridurans.